Consider the following 296-residue polypeptide: Bifunctional protein FolD (296 aa).

Residues 166 to 168 (GRS), Ser195, and Thr236 contribute to the NADP(+) site.

This sequence belongs to the tetrahydrofolate dehydrogenase/cyclohydrolase family. Homodimer.

The catalysed reaction is (6R)-5,10-methylene-5,6,7,8-tetrahydrofolate + NADP(+) = (6R)-5,10-methenyltetrahydrofolate + NADPH. It catalyses the reaction (6R)-5,10-methenyltetrahydrofolate + H2O = (6R)-10-formyltetrahydrofolate + H(+). The protein operates within one-carbon metabolism; tetrahydrofolate interconversion. Functionally, catalyzes the oxidation of 5,10-methylenetetrahydrofolate to 5,10-methenyltetrahydrofolate and then the hydrolysis of 5,10-methenyltetrahydrofolate to 10-formyltetrahydrofolate. This Dehalococcoides mccartyi (strain CBDB1) protein is Bifunctional protein FolD.